A 308-amino-acid chain; its full sequence is Porphobilinogen deaminase (308 aa).

Cys-241 carries the S-(dipyrrolylmethanemethyl)cysteine modification.

Belongs to the HMBS family. As to quaternary structure, monomer. Requires dipyrromethane as cofactor.

It carries out the reaction 4 porphobilinogen + H2O = hydroxymethylbilane + 4 NH4(+). Its pathway is porphyrin-containing compound metabolism; protoporphyrin-IX biosynthesis; coproporphyrinogen-III from 5-aminolevulinate: step 2/4. Functionally, tetrapolymerization of the monopyrrole PBG into the hydroxymethylbilane pre-uroporphyrinogen in several discrete steps. This chain is Porphobilinogen deaminase, found in Exiguobacterium sibiricum (strain DSM 17290 / CCUG 55495 / CIP 109462 / JCM 13490 / 255-15).